Reading from the N-terminus, the 298-residue chain is Tyrosine recombinase XerC (298 aa).

Residues 2-88 (TDLHTDVERY…ALRSFFDWLV (87 aa)) enclose the Core-binding (CB) domain. A Tyr recombinase domain is found at 109 to 288 (HLPKNIDVDD…DFQHLASVYD (180 aa)). Active-site residues include Arg-148, Lys-172, His-240, Arg-243, and His-266. Tyr-275 functions as the O-(3'-phospho-DNA)-tyrosine intermediate in the catalytic mechanism.

Belongs to the 'phage' integrase family. XerC subfamily. Forms a cyclic heterotetrameric complex composed of two molecules of XerC and two molecules of XerD, in which XerC interacts with XerD via its C-terminal region, XerD interacts with XerC via its C-terminal region and so on.

The protein resides in the cytoplasm. With respect to regulation, ftsK may regulate the catalytic switch between XerC and XerD in the heterotetrameric complex during the two steps of the recombination process. Its function is as follows. Site-specific tyrosine recombinase, which acts by catalyzing the cutting and rejoining of the recombining DNA molecules. Binds cooperatively to specific DNA consensus sequences that are separated from XerD binding sites by a short central region, forming the heterotetrameric XerC-XerD complex that recombines DNA substrates. The complex is essential to convert dimers of the bacterial chromosome into monomers to permit their segregation at cell division. It also contributes to the segregational stability of plasmids. In the complex XerC specifically exchanges the top DNA strands. The chain is Tyrosine recombinase XerC from Escherichia coli O6:K15:H31 (strain 536 / UPEC).